Consider the following 275-residue polypeptide: Probable ribosomal RNA small subunit methyltransferase A (275 aa).

Residues Leu-13, Gly-38, Glu-59, Asp-84, and Asn-101 each coordinate S-adenosyl-L-methionine.

This sequence belongs to the class I-like SAM-binding methyltransferase superfamily. rRNA adenine N(6)-methyltransferase family. RsmA subfamily.

It is found in the cytoplasm. Specifically dimethylates two adjacent adenosines in the loop of a conserved hairpin near the 3'-end of 16S rRNA in the 30S particle. May play a critical role in biogenesis of 30S subunits. In Methanocaldococcus jannaschii (strain ATCC 43067 / DSM 2661 / JAL-1 / JCM 10045 / NBRC 100440) (Methanococcus jannaschii), this protein is Probable ribosomal RNA small subunit methyltransferase A.